The sequence spans 525 residues: tRNA-2-methylthio-N(6)-dimethylallyladenosine synthase (525 aa).

Positions 14 to 130 (RTYQVRTYGC…LPTLLERARH (117 aa)) constitute an MTTase N-terminal domain. [4Fe-4S] cluster is bound by residues C23, C59, C93, C167, C171, and C174. In terms of domain architecture, Radical SAM core spans 153–400 (RESAYAGWVS…IELQERISLE (248 aa)). Residues 403–482 (QAQVGRTLEL…PHHLIADGAL (80 aa)) form the TRAM domain.

Belongs to the methylthiotransferase family. MiaB subfamily. As to quaternary structure, monomer. [4Fe-4S] cluster serves as cofactor.

Its subcellular location is the cytoplasm. It carries out the reaction N(6)-dimethylallyladenosine(37) in tRNA + (sulfur carrier)-SH + AH2 + 2 S-adenosyl-L-methionine = 2-methylsulfanyl-N(6)-dimethylallyladenosine(37) in tRNA + (sulfur carrier)-H + 5'-deoxyadenosine + L-methionine + A + S-adenosyl-L-homocysteine + 2 H(+). Its function is as follows. Catalyzes the methylthiolation of N6-(dimethylallyl)adenosine (i(6)A), leading to the formation of 2-methylthio-N6-(dimethylallyl)adenosine (ms(2)i(6)A) at position 37 in tRNAs that read codons beginning with uridine. The protein is tRNA-2-methylthio-N(6)-dimethylallyladenosine synthase of Mycobacterium sp. (strain MCS).